Here is a 186-residue protein sequence, read N- to C-terminus: Large ribosomal subunit protein uL5 (186 aa).

The protein belongs to the universal ribosomal protein uL5 family. Part of the 50S ribosomal subunit; part of the 5S rRNA/L5/L18/L25 subcomplex. Contacts the 5S rRNA and the P site tRNA. Forms a bridge to the 30S subunit in the 70S ribosome.

This is one of the proteins that bind and probably mediate the attachment of the 5S RNA into the large ribosomal subunit, where it forms part of the central protuberance. In the 70S ribosome it contacts protein S13 of the 30S subunit (bridge B1b), connecting the 2 subunits; this bridge is implicated in subunit movement. Contacts the P site tRNA; the 5S rRNA and some of its associated proteins might help stabilize positioning of ribosome-bound tRNAs. The polypeptide is Large ribosomal subunit protein uL5 (Ruegeria pomeroyi (strain ATCC 700808 / DSM 15171 / DSS-3) (Silicibacter pomeroyi)).